Reading from the N-terminus, the 324-residue chain is MRIIFAGTPDFAARALEELQKAGLDIVLTLTQPDRPAGRGMKMQASPVKILAQQYDIPLLQPETLKSSDIQAQLATFKPDVMIVAAYGLLLPEAVLRIPRHGCINIHASLLPRWRGAAPIQRALLEGDTETGISIMQMNQGLDTGAVLLKRSLPIEPYDTTATLHDKLADLGGKCIVEALTLLDQGRLISEPQNEVDACYAAKIRKIEAEIDWTCDAAYIDRMIRTFDPHPGAFTHLQGNTIKLWQARIVSHVNHNSSHQAGKIITVDPDGIVVACGRDALSIDILQKAGGKKLTAAQFLAGHPLHPGESFHKATQDNQGASET.

109–112 (SLLP) contacts (6S)-5,6,7,8-tetrahydrofolate. The segment at 305-324 (LHPGESFHKATQDNQGASET) is disordered.

It belongs to the Fmt family.

The enzyme catalyses L-methionyl-tRNA(fMet) + (6R)-10-formyltetrahydrofolate = N-formyl-L-methionyl-tRNA(fMet) + (6S)-5,6,7,8-tetrahydrofolate + H(+). Functionally, attaches a formyl group to the free amino group of methionyl-tRNA(fMet). The formyl group appears to play a dual role in the initiator identity of N-formylmethionyl-tRNA by promoting its recognition by IF2 and preventing the misappropriation of this tRNA by the elongation apparatus. This Nitrosomonas europaea (strain ATCC 19718 / CIP 103999 / KCTC 2705 / NBRC 14298) protein is Methionyl-tRNA formyltransferase.